Reading from the N-terminus, the 466-residue chain is Ras-GEF domain-containing family member 1C (466 aa).

Disordered regions lie at residues M1 to D35 and S443 to T466. In terms of domain architecture, N-terminal Ras-GEF spans L34–A164. The 247-residue stretch at D200–P446 folds into the Ras-GEF domain.

In terms of biological role, guanine nucleotide exchange factor (GEF). This Mus musculus (Mouse) protein is Ras-GEF domain-containing family member 1C (Rasgef1c).